Reading from the N-terminus, the 338-residue chain is Ferredoxin--NADP reductase (338 aa).

7 residues coordinate FAD: aspartate 32, glutamine 40, tyrosine 45, valine 85, phenylalanine 120, aspartate 287, and threonine 327.

Belongs to the ferredoxin--NADP reductase type 2 family. As to quaternary structure, homodimer. Requires FAD as cofactor.

It catalyses the reaction 2 reduced [2Fe-2S]-[ferredoxin] + NADP(+) + H(+) = 2 oxidized [2Fe-2S]-[ferredoxin] + NADPH. This Wolbachia pipientis wMel protein is Ferredoxin--NADP reductase.